The chain runs to 1620 residues: ABC-type organic anion transporter ABCA8A (1620 aa).

The next 7 helical transmembrane spans lie at 30–50 (TFLE…FLQL), 224–244 (CFLF…SAGV), 263–283 (SAFW…VTLL), 294–314 (VFLT…LSLI), 328–348 (FLTD…GFTA), 357–377 (LEWL…VQLL), and 397–417 (IGTI…TFYF). Asn-454 and Asn-482 each carry an N-linked (GlcNAc...) asparagine glycan. Residues 478–713 (IRIRNLTKDY…WGIGYHLSLQ (236 aa)) enclose the ABC transporter 1 domain. Residue 514 to 521 (GHSGAGKS) participates in ATP binding. The chain crosses the membrane as a helical span at residues 861 to 881 (IVILILVLGIGLLHILSANIY). Asn-967 carries N-linked (GlcNAc...) asparagine glycosylation. 7 consecutive transmembrane segments (helical) span residues 979-999 (CFPV…APSA), 1019-1039 (YLAY…YISM), 1068-1088 (ALFE…AFYA), 1105-1125 (ILYV…ISFI), 1133-1153 (SGLW…FMLI), 1159-1179 (ISLF…CTLL), and 1196-1216 (EYSY…VVIL). The ABC transporter 2 domain maps to 1284–1517 (LRKEYKGKKK…FGKEYLLEMK (234 aa)). 1322–1329 (GHNGAGKS) contributes to the ATP binding site.

Belongs to the ABC transporter superfamily. ABCA family. As to expression, expressed in lung, heart, liver, skeletal muscle and testis. Highly expressed in the liver, and is also abundant in heart and skeletal muscle. Highly expressed in heart.

The protein localises to the cell membrane. The protein resides in the basolateral cell membrane. It catalyses the reaction taurocholate(in) + ATP + H2O = taurocholate(out) + ADP + phosphate + H(+). The enzyme catalyses cholesterol(in) + ATP + H2O = cholesterol(out) + ADP + phosphate + H(+). Cholesterol efflux is increased by extracellularly applied taurocholate. Its function is as follows. Mediates cholesterol and taurocholate efflux. Through the interaction with ABCA1 potentiates the cholesterol efflux to lipid-free APOA1, in turn regulates high-density lipoprotein cholesterol levels. This is ABC-type organic anion transporter ABCA8A from Mus musculus (Mouse).